The primary structure comprises 152 residues: Small ribosomal subunit protein uS19u (152 aa).

The protein belongs to the universal ribosomal protein uS19 family.

It is found in the cytoplasm. In Arabidopsis thaliana (Mouse-ear cress), this protein is Small ribosomal subunit protein uS19u (RPS15A).